We begin with the raw amino-acid sequence, 103 residues long: Large ribosomal subunit protein bL21 (103 aa).

Belongs to the bacterial ribosomal protein bL21 family. As to quaternary structure, part of the 50S ribosomal subunit. Contacts protein L20.

Its function is as follows. This protein binds to 23S rRNA in the presence of protein L20. The sequence is that of Large ribosomal subunit protein bL21 from Ruminiclostridium cellulolyticum (strain ATCC 35319 / DSM 5812 / JCM 6584 / H10) (Clostridium cellulolyticum).